Reading from the N-terminus, the 691-residue chain is F-box/LRR-repeat protein 5 (691 aa).

The tract at residues 1 to 159 (MAPFPEEVDV…IKKKVIAQHC (159 aa)) is hemerythrin-like. Positions 15, 57, 58, 61, 80, 126, and 130 each coordinate Fe(3+). Residues 202-248 (STGITHLPPEVMLSIFSYLNPQELCRCSQVSMKWSQLTKTGSLWKHL) enclose the F-box domain. 7 LRR repeats span residues 340-364 (SSAV…LDLT), 365-392 (QTDI…DLSG), 393-418 (CEKI…QSGF), 479-508 (LWML…CVVE), 576-607 (TRLP…SLSG), 608-635 (CYQI…NLSG), and 636-661 (CLTI…YFYY). The [2Fe-2S] cluster site is built by Cys-662, Cys-676, Cys-686, and Cys-687.

As to quaternary structure, part of a SCF (SKP1-cullin-F-box) protein ligase complex. Interacts with ACO1/IRP1, IREB2/IRP2; the interaction depends on the [2Fe-2S] cluster. Interacts with DCTN1/p150-glued. Requires [2Fe-2S] cluster as cofactor. Post-translationally, polybiquitinated upon iron and oxygen depletion, leading to its degradation by the proteasome. Ubiquitination is regulated by the hemerythrin-like region that acts as an oxygen and iron sensor. Undergoes constitutive ubiquitin-dependent degradation at the steady state by HERC2.

It is found in the cytoplasm. It localises to the perinuclear region. The protein resides in the nucleus. The protein operates within protein modification; protein ubiquitination. Its activity is regulated as follows. An iron-sulfur cluster promotes IRP2 polyubiquitination and degradation in response to both iron and oxygen concentrations. Functionally, component of some SCF (SKP1-cullin-F-box) protein ligase complex that plays a central role in iron homeostasis by promoting the ubiquitination and subsequent degradation of IREB2/IRP2. The C-terminal domain of FBXL5 contains a redox-sensitive [2Fe-2S] cluster that, upon oxidation, promotes binding to IRP2 to effect its oxygen-dependent degradation. Under iron deficiency conditions, the N-terminal hemerythrin-like (Hr) region, which contains a diiron metal center, cannot bind iron and undergoes conformational changes that destabilize the FBXL5 protein and cause its ubiquitination and degradation. When intracellular iron levels start rising, the Hr region is stabilized. Additional increases in iron levels facilitate the assembly and incorporation of a redox active [2Fe-2S] cluster in the C-terminal domain. Only when oxygen level is high enough to maintain the cluster in its oxidized state can FBXL5 recruit IRP2 as a substrate for polyubiquination and degradation. Promotes ubiquitination and subsequent degradation of the dynactin complex component DCTN1. Within the nucleus, promotes the ubiquitination of SNAI1; preventing its interaction with DNA and promoting its degradation. Negatively regulates DNA damage response by mediating the ubiquitin-proteasome degradation of the DNA repair protein NABP2. The chain is F-box/LRR-repeat protein 5 (FBXL5) from Pongo abelii (Sumatran orangutan).